The following is a 365-amino-acid chain: Probable dual-specificity RNA methyltransferase RlmN (365 aa).

The active-site Proton acceptor is the glutamate 108. The Radical SAM core domain maps to 114 to 352 (YPDRNTVCIS…SCTVRDTRGR (239 aa)). An intrachain disulfide couples cysteine 121 to cysteine 358. [4Fe-4S] cluster contacts are provided by cysteine 128, cysteine 132, and cysteine 135. Residues 179–180 (GE), serine 213, 236–238 (SLH), and asparagine 315 contribute to the S-adenosyl-L-methionine site. Residue cysteine 358 is the S-methylcysteine intermediate of the active site.

It belongs to the radical SAM superfamily. RlmN family. It depends on [4Fe-4S] cluster as a cofactor.

The protein localises to the cytoplasm. It catalyses the reaction adenosine(2503) in 23S rRNA + 2 reduced [2Fe-2S]-[ferredoxin] + 2 S-adenosyl-L-methionine = 2-methyladenosine(2503) in 23S rRNA + 5'-deoxyadenosine + L-methionine + 2 oxidized [2Fe-2S]-[ferredoxin] + S-adenosyl-L-homocysteine. It carries out the reaction adenosine(37) in tRNA + 2 reduced [2Fe-2S]-[ferredoxin] + 2 S-adenosyl-L-methionine = 2-methyladenosine(37) in tRNA + 5'-deoxyadenosine + L-methionine + 2 oxidized [2Fe-2S]-[ferredoxin] + S-adenosyl-L-homocysteine. Functionally, specifically methylates position 2 of adenine 2503 in 23S rRNA and position 2 of adenine 37 in tRNAs. This is Probable dual-specificity RNA methyltransferase RlmN from Mycolicibacterium gilvum (strain PYR-GCK) (Mycobacterium gilvum (strain PYR-GCK)).